Consider the following 435-residue polypeptide: Palmitoyltransferase pfa4 (435 aa).

Residues 1–10 (MLCSSFSVSR) lie on the Cytoplasmic side of the membrane. Residues 11 to 31 (LAIPAVCILIAFLAYTSQIFF) form a helical membrane-spanning segment. The Lumenal segment spans residues 32-48 (LYFEDAPLKEDEVWRIN). A helical membrane pass occupies residues 49–69 (ILAICIWICYYRACTVDPGHV). Over 70-129 (PKGWMPSDRERLKADRASGRQRWCRRCEAYKPPRAHHCKTCERCVPKMDHHCPWTSNCVS) the chain is Cytoplasmic. The region spanning 91–141 (RWCRRCEAYKPPRAHHCKTCERCVPKMDHHCPWTSNCVSHFTFPHFARFLF) is the DHHC domain. Cys-121 serves as the catalytic S-palmitoyl cysteine intermediate. Residues 130–150 (HFTFPHFARFLFYAVVGIAYL) form a helical membrane-spanning segment. Topologically, residues 151–179 (ETRLWQRVSKVWGSRHLPSYLGPSMGQIG) are lumenal. Residues 180 to 200 (HLFVLFVTNSLTLFALSLLLL) form a helical membrane-spanning segment. The Cytoplasmic segment spans residues 201–435 (RTLWSLGSNT…QRAKRQHLSQ (235 aa)). Basic and acidic residues predominate over residues 359 to 368 (RKPFHVRLEE). Residues 359–408 (RKPFHVRLEEYSNGSSDAEADTGSDDDSDHGEEGWKNSEGERLRDFGVDE) are disordered. Positions 376 to 388 (AEADTGSDDDSDH) are enriched in acidic residues. The segment covering 389-405 (GEEGWKNSEGERLRDFG) has biased composition (basic and acidic residues).

It belongs to the DHHC palmitoyltransferase family. PFA4 subfamily.

The protein localises to the endoplasmic reticulum membrane. The catalysed reaction is L-cysteinyl-[protein] + hexadecanoyl-CoA = S-hexadecanoyl-L-cysteinyl-[protein] + CoA. Its function is as follows. Mediates the reversible addition of palmitate to target proteins, thereby regulating their membrane association and biological function. This chain is Palmitoyltransferase pfa4, found in Emericella nidulans (strain FGSC A4 / ATCC 38163 / CBS 112.46 / NRRL 194 / M139) (Aspergillus nidulans).